The sequence spans 405 residues: Replication factor C large subunit (405 aa).

ATP is bound at residue 47–54 (GPPGVGKT).

It belongs to the activator 1 small subunits family. RfcL subfamily. Heteromultimer composed of small subunits (RfcS) and large subunits (RfcL).

In terms of biological role, part of the RFC clamp loader complex which loads the PCNA sliding clamp onto DNA. The sequence is that of Replication factor C large subunit from Saccharolobus islandicus (strain M.16.27) (Sulfolobus islandicus).